We begin with the raw amino-acid sequence, 153 residues long: Ubiquitin-conjugating enzyme E2 ubc-18 (153 aa).

The region spanning 2–149 is the UBC core domain; it reads SATRRLQKEL…AEEHTRKHAE (148 aa). Residue Cys-86 is the Glycyl thioester intermediate of the active site.

Belongs to the ubiquitin-conjugating enzyme family. In terms of assembly, interacts with E3 ubiquitin-protein ligase wwp-1. Interacts with RBR-type E3 ubiquitin transferase ari-1.1. In terms of tissue distribution, expressed in neurons localized in the head and tail of adults.

It carries out the reaction S-ubiquitinyl-[E1 ubiquitin-activating enzyme]-L-cysteine + [E2 ubiquitin-conjugating enzyme]-L-cysteine = [E1 ubiquitin-activating enzyme]-L-cysteine + S-ubiquitinyl-[E2 ubiquitin-conjugating enzyme]-L-cysteine.. Its function is as follows. Ubiquitin-conjugating enzyme E2. Accepts ubiquitin from the E1 complex and catalyzes its covalent attachment to other proteins. Required for diet restriction-mediated lifespan extension, probably acting as part of a complex with ubiquitin-protein ligase wwp-1. Acts redundantly with lin-35/Rb in the regulation of pharyngeal morphogenesis during embryonic development by negatively regulating the expression of proteins such as sup-35. The chain is Ubiquitin-conjugating enzyme E2 ubc-18 from Caenorhabditis elegans.